The sequence spans 147 residues: Hemoglobin subunit beta-1 (147 aa).

At Val-2 the chain carries N-acetylvaline. Residues 3 to 147 (HLTDAEKAAV…VATALAHKYH (145 aa)) form the Globin domain. Lys-18 is modified (N6-succinyllysine). 3 positions are modified to phosphoserine: Ser-21, Ser-45, and Ser-51. Lys-60 carries the post-translational modification N6-succinyllysine. Positions 64 and 93 each coordinate heme b. Arg-105 carries the asymmetric dimethylarginine modification. At Thr-124 the chain carries Phosphothreonine.

It belongs to the globin family. As to quaternary structure, heterotetramer of two alpha chains and two beta chains. Red blood cells.

Involved in oxygen transport from the lung to the various peripheral tissues. The polypeptide is Hemoglobin subunit beta-1 (Hbb-b1) (Mus musculus (Mouse)).